A 394-amino-acid polypeptide reads, in one-letter code: MNKKSVKDIDVKGKVVFCRVDFNVPMKDGKVTDDTRIRAALPTIEYLTGQGAKVLLASHLGRPKGQVTEELRLTPVAKRLQELLGQEVKKADEAYGDNVKKQISDLKDGDVLVLENVRFYPGEEKNDPELSKAFADLADVYVNDAFGAAHRAHASTAGIAAYLPAVSGFLMQKELEVLGKAISNPDRPFTAIIGGAKVKDKIGVIESLLDKVDNLIIGGGLAYTFVKALGHEVGKSLLEEDKVDLAKSFMDRAKEKGVNFLIPTDVLVADDFSNDANTSIVPISEIPSDLEALDIGTETREKYADVIKNSKLVVWNGPMGVFEIDAFAKGTKAIAEALAEAKDTYSVIGGGDSAAAVEKFGLADQMSHISTGGGASLEFMEGKELPGVTALNDK.

Substrate-binding positions include D21–N23, R36, H59–R62, R118, and R151. At S183 the chain carries Phosphoserine. Position 201 (K201) interacts with ATP. Position 299 is a phosphothreonine (T299). Residues E323 and G350 to S353 contribute to the ATP site.

This sequence belongs to the phosphoglycerate kinase family. Monomer.

The protein localises to the cytoplasm. The catalysed reaction is (2R)-3-phosphoglycerate + ATP = (2R)-3-phospho-glyceroyl phosphate + ADP. Its pathway is carbohydrate degradation; glycolysis; pyruvate from D-glyceraldehyde 3-phosphate: step 2/5. The chain is Phosphoglycerate kinase from Bacillus pumilus (strain SAFR-032).